The primary structure comprises 97 residues: Putative pterin-4-alpha-carbinolamine dehydratase (97 aa).

Belongs to the pterin-4-alpha-carbinolamine dehydratase family.

The enzyme catalyses (4aS,6R)-4a-hydroxy-L-erythro-5,6,7,8-tetrahydrobiopterin = (6R)-L-erythro-6,7-dihydrobiopterin + H2O. This Christiangramia forsetii (strain DSM 17595 / CGMCC 1.15422 / KT0803) (Gramella forsetii) protein is Putative pterin-4-alpha-carbinolamine dehydratase.